The primary structure comprises 224 residues: 7-cyano-7-deazaguanine synthase (224 aa).

Position 8-18 (8-18 (VSGGADSATVL)) interacts with ATP. Positions 189, 199, 202, and 205 each coordinate Zn(2+).

This sequence belongs to the QueC family. Requires Zn(2+) as cofactor.

It carries out the reaction 7-carboxy-7-deazaguanine + NH4(+) + ATP = 7-cyano-7-deazaguanine + ADP + phosphate + H2O + H(+). The protein operates within purine metabolism; 7-cyano-7-deazaguanine biosynthesis. Catalyzes the ATP-dependent conversion of 7-carboxy-7-deazaguanine (CDG) to 7-cyano-7-deazaguanine (preQ(0)). In Rickettsia felis (strain ATCC VR-1525 / URRWXCal2) (Rickettsia azadi), this protein is 7-cyano-7-deazaguanine synthase.